Consider the following 213-residue polypeptide: Glycerol-3-phosphate acyltransferase (213 aa).

6 helical membrane-spanning segments follow: residues 2–22, 52–74, 81–100, 112–132, 143–163, and 164–184; these read ITIVLLILAYLLGSIPSGLWI, AGMATFVIDFFKGTLATLLPIIF, PLIFGLLAVIGHTFPIFAGF, VIFGFAPIFCLYLAIIFFGAL, VTASIAAVIGVLLFPLFGFIL, and SNYDFLFIAIILALASLIIIR.

The protein belongs to the PlsY family. Probably interacts with PlsX.

The protein localises to the cell membrane. It catalyses the reaction an acyl phosphate + sn-glycerol 3-phosphate = a 1-acyl-sn-glycero-3-phosphate + phosphate. Its pathway is lipid metabolism; phospholipid metabolism. Catalyzes the transfer of an acyl group from acyl-phosphate (acyl-PO(4)) to glycerol-3-phosphate (G3P) to form lysophosphatidic acid (LPA). This enzyme utilizes acyl-phosphate as fatty acyl donor, but not acyl-CoA or acyl-ACP. The sequence is that of Glycerol-3-phosphate acyltransferase from Streptococcus pneumoniae (strain CGSP14).